Reading from the N-terminus, the 246-residue chain is Submandibular gland secretory Glx-rich protein CA (246 aa).

The N-terminal stretch at 1 to 18 (MLVVLLTAALLALSSAQG) is a signal peptide. The tract at residues 14–223 (SSAQGTDEEV…SGRPKKPLLP (210 aa)) is disordered. Low complexity-rich tracts occupy residues 39-50 (PVDSGSDPPSAD), 58-71 (EGES…EPPA), 81-93 (QQEP…QEPP), 104-116 (QQEP…QEPP), 127-141 (QQEP…PPAT), 150-159 (QQESTQAENQ), and 178-196 (VESP…QQTN). Repeat copies occupy residues 67–89 (EEPP…QAEN), 90–112 (QEPP…QAEN), 113–135 (QEPP…QAED), 136–158 (QQPP…QAEN), and 159–181 (QEPS…VESP). The tract at residues 67–181 (EEPPATSGSE…QPEEGNVESP (115 aa)) is 5 X 23 AA tandem repeats. A compositionally biased stretch (basic and acidic residues) spans 197-216 (PEEKPPAPKTQEEPQHDSGR).

In terms of tissue distribution, submandibular gland acinar cells.

Its subcellular location is the secreted. GRP proteins have a marked affinity for hydroxyapatite. They may play a role in the formation of the protective acquired pellicle at the saliva-tooth interface. The chain is Submandibular gland secretory Glx-rich protein CA (Grpca) from Rattus norvegicus (Rat).